The sequence spans 314 residues: tRNA dimethylallyltransferase (314 aa).

An ATP-binding site is contributed by 9–16 (GPTAVGKT). 11-16 (TAVGKT) is a substrate binding site. The segment at 34–37 (DSVQ) is interaction with substrate tRNA.

This sequence belongs to the IPP transferase family. In terms of assembly, monomer. Mg(2+) serves as cofactor.

It carries out the reaction adenosine(37) in tRNA + dimethylallyl diphosphate = N(6)-dimethylallyladenosine(37) in tRNA + diphosphate. Functionally, catalyzes the transfer of a dimethylallyl group onto the adenine at position 37 in tRNAs that read codons beginning with uridine, leading to the formation of N6-(dimethylallyl)adenosine (i(6)A). The protein is tRNA dimethylallyltransferase of Desulfitobacterium hafniense (strain DSM 10664 / DCB-2).